We begin with the raw amino-acid sequence, 106 residues long: UPF0060 membrane protein Csal_2746 (106 aa).

Transmembrane regions (helical) follow at residues leucine 6–leucine 26, serine 31–leucine 51, valine 59–aspartate 79, and proline 85–tryptophan 105.

It belongs to the UPF0060 family.

Its subcellular location is the cell inner membrane. The chain is UPF0060 membrane protein Csal_2746 from Chromohalobacter salexigens (strain ATCC BAA-138 / DSM 3043 / CIP 106854 / NCIMB 13768 / 1H11).